A 422-amino-acid polypeptide reads, in one-letter code: 5-methylthioadenosine/S-adenosylhomocysteine deaminase 1 (422 aa).

2 residues coordinate Zn(2+): His56 and His58. 2 residues coordinate substrate: Glu85 and His174. A Zn(2+)-binding site is contributed by His201. Residues Glu204 and Asp290 each contribute to the substrate site. Asp290 is a Zn(2+) binding site.

It belongs to the metallo-dependent hydrolases superfamily. MTA/SAH deaminase family. Requires Zn(2+) as cofactor.

It catalyses the reaction S-adenosyl-L-homocysteine + H2O + H(+) = S-inosyl-L-homocysteine + NH4(+). It carries out the reaction S-methyl-5'-thioadenosine + H2O + H(+) = S-methyl-5'-thioinosine + NH4(+). Catalyzes the deamination of 5-methylthioadenosine and S-adenosyl-L-homocysteine into 5-methylthioinosine and S-inosyl-L-homocysteine, respectively. Is also able to deaminate adenosine. The polypeptide is 5-methylthioadenosine/S-adenosylhomocysteine deaminase 1 (Archaeoglobus fulgidus (strain ATCC 49558 / DSM 4304 / JCM 9628 / NBRC 100126 / VC-16)).